Reading from the N-terminus, the 528-residue chain is Berberine bridge enzyme-like 17 (528 aa).

The first 19 residues, 1 to 19 (MKEVVYVLLLVLLVSVSDA), serve as a signal peptide directing secretion. N-linked (GlcNAc...) asparagine glycosylation is found at Asn20, Asn35, Asn52, and Asn72. An intrachain disulfide couples Cys32 to Cys94. One can recognise an FAD-binding PCMH-type domain in the interval 69–246 (LNPNDTKLIA…LSWKINLVDV (178 aa)). Positions 109-171 (HDYEGLSFTS…KTLAFAGGVC (63 aa)) form a cross-link, 6-(S-cysteinyl)-8alpha-(pros-histidyl)-FAD (His-Cys). N-linked (GlcNAc...) asparagine glycosylation is found at Asn256, Asn340, and Asn439.

Belongs to the oxygen-dependent FAD-linked oxidoreductase family. FAD serves as cofactor. The FAD cofactor is bound via a bicovalent 6-S-cysteinyl, 8alpha-N1-histidyl FAD linkage.

It localises to the secreted. The protein resides in the cell wall. The chain is Berberine bridge enzyme-like 17 from Arabidopsis thaliana (Mouse-ear cress).